Reading from the N-terminus, the 817-residue chain is V-type proton ATPase subunit a1 (817 aa).

Residues 1–422 (MEEFLDKLPQ…PAVYSVVTYP (422 aa)) are Cytoplasmic-facing. Residues 97–133 (DIALGDLERQLADHEHEVLEMNSNSEKLRQTYNELLE) are a coiled coil. Residues 423–443 (FLFAVMFGDWGHGLCLLLGAL) traverse the membrane as a helical segment. The Vacuolar segment spans residues 444–468 (YLLARERKLSTQKLGSFMEMLFGGR). A helical transmembrane segment spans residues 469 to 489 (YVILLMALFSIYCGLIYNEFF). Over 490–547 (SVPFHIFGGSAYKCRDTTCSDAYTVGLIKYRDPYPFGVDPSWRGSRTELPYLNSLKMK) the chain is Cytoplasmic. The helical transmembrane segment at 548–568 (MSILLGIAQMNLGLILSFFNA) threads the bilayer. Residues 569 to 580 (RFFGSSLDIRYQ) lie on the Vacuolar side of the membrane. A helical membrane pass occupies residues 581–601 (FIPQMIFLNSLFGYLSLLIII). Over 602–639 (KWCTGSQADLYHVMIYMFLSPTEELGENELFWGQRPLQ) the chain is Cytoplasmic. A helical membrane pass occupies residues 640–660 (IVLLLLAFIAVPWMLFPKPFA). The Vacuolar portion of the chain corresponds to 661–758 (LRKIHMERFQ…VLLLAWGYEN (98 aa)). A helical membrane pass occupies residues 759–779 (ILIRLIGVAVFAFATAFILLM). Topologically, residues 780 to 817 (METLSAFLHALRLHWVEFMGKFFNGDGYKFKPFSFALI) are cytoplasmic.

Belongs to the V-ATPase 116 kDa subunit family. In terms of assembly, V-ATPase is a heteromultimeric enzyme composed of a peripheral catalytic V1 complex (components A to H) attached to an integral membrane V0 proton pore complex (components: a, c, c'', d and e).

It localises to the vacuole membrane. Its subcellular location is the golgi apparatus. The protein localises to the trans-Golgi network membrane. Functionally, essential component of the vacuolar proton pump (V-ATPase), a multimeric enzyme that catalyzes the translocation of protons across the membranes. Required for assembly and activity of the V-ATPase. Required during cell expansion. The sequence is that of V-type proton ATPase subunit a1 from Arabidopsis thaliana (Mouse-ear cress).